A 101-amino-acid chain; its full sequence is Small ribosomal subunit protein uS10 (101 aa).

It belongs to the universal ribosomal protein uS10 family. Part of the 30S ribosomal subunit.

In terms of biological role, involved in the binding of tRNA to the ribosomes. This Flavobacterium psychrophilum (strain ATCC 49511 / DSM 21280 / CIP 103535 / JIP02/86) protein is Small ribosomal subunit protein uS10.